The sequence spans 607 residues: Phosphatidylinositol 4-kinase LSB6 (607 aa).

Polar residues predominate over residues 73-88 (NVPSESPRPDQTSGSN). The segment at 73 to 93 (NVPSESPRPDQTSGSNPAVGL) is disordered. Residues 161–522 (GRELERIQTG…LVRRTRCQVI (362 aa)) enclose the PI3K/PI4K catalytic domain. The interval 167-173 (IQTGSSG) is G-loop. Residues 318 to 356 (KSSGEDINHKPETTRNLTDETEPSKQINSSPISTESEEN) are disordered. The span at 319–330 (SSGEDINHKPET) shows a compositional bias: basic and acidic residues. The segment covering 341-351 (SKQINSSPIST) has biased composition (polar residues). A catalytic loop region spans residues 384–392 (RNTDRGLDN). The activation loop stretch occupies residues 411–431 (AIDNGLSFPWKHPDEWRLYPY).

The protein belongs to the PI3/PI4-kinase family. Interacts with LAS17. The cofactor is Mg(2+). Requires Mn(2+) as cofactor.

It localises to the cell membrane. The protein resides in the vacuole membrane. It carries out the reaction a 1,2-diacyl-sn-glycero-3-phospho-(1D-myo-inositol) + ATP = a 1,2-diacyl-sn-glycero-3-phospho-(1D-myo-inositol 4-phosphate) + ADP + H(+). May play a role in endocytic and/or exocytic pathways. The polypeptide is Phosphatidylinositol 4-kinase LSB6 (LSB6) (Saccharomyces cerevisiae (strain ATCC 204508 / S288c) (Baker's yeast)).